The chain runs to 430 residues: Protein IQ-DOMAIN 3 (430 aa).

Residues 1–36 (MGKSWFSAVKKALSPEPKQKKEQKPHKSKKWFGKSK) are disordered. Residues 9–16 (VKKALSPE) carry the Nuclear localization signal 1 motif. Basic residues predominate over residues 23 to 35 (QKPHKSKKWFGKS). Residues 107–135 (EEIAAIKIQTAFRGYMARRALRALRGLVR) form the IQ domain. Residues 170–224 (RLRLSEDKQALTRQLQQKHNKDFDKTGENWNDSTLSREKVEANMLNKQVATMRRE) are a coiled coil. The segment at 213–231 (MLNKQVATMRREKALAYAF) is calmodulin-binding. Disordered regions lie at residues 271–368 (ENHS…SQSV) and 385–430 (SNLS…TNLA). Over residues 286–295 (ARSVASRAMS) the composition is skewed to low complexity. A compositionally biased stretch (polar residues) spans 326–340 (SEDSNSIVSFQSEQP). The Nuclear localization signal 2 motif lies at 396 to 403 (AKKRLSFS).

It belongs to the IQD family. As to quaternary structure, binds to multiple calmodulin (CaM) in the presence of Ca(2+) and CaM-like proteins.

It localises to the nucleus. The protein resides in the nucleolus. The protein localises to the cytoplasm. It is found in the cytoskeleton. May be involved in cooperative interactions with calmodulins or calmodulin-like proteins. Recruits calmodulin proteins to microtubules, thus being a potential scaffold in cellular signaling and trafficking. May associate with nucleic acids and regulate gene expression at the transcriptional or post-transcriptional level. The protein is Protein IQ-DOMAIN 3 of Arabidopsis thaliana (Mouse-ear cress).